The primary structure comprises 340 residues: MNLLRKILFPFAILYGLITSIRNFLFDKGILKSTSFDLPVIAVGNLSVGGTGKTPQIEYLIRLLSNKYRAATLSRGYKRKSEGFVLADENSNAEILGDEPFQFYQKFPDVQVAVDANRTNGITQLLSQNVKPQVILLDDAYQHRKVKAGFYILLTSYDDLYADDFMLPTGNLRESRSGANRANIVVVTKCPKNLSEEKQAEIRLKLKLSCSQQIFFTYIDYDVEIYGKDEKISAAEIKSESKLLLAGIAKPKPFFEYLKNENDECLTFPDHHHFSDADLESIQNKANGRKIITTEKDYVRLKDSKLVSQLYYLPIKSTFINHQQNFDVSILQYIKENLEP.

ATP is bound at residue 47 to 54 (SVGGTGKT).

Belongs to the LpxK family.

The catalysed reaction is a lipid A disaccharide + ATP = a lipid IVA + ADP + H(+). Its pathway is glycolipid biosynthesis; lipid IV(A) biosynthesis; lipid IV(A) from (3R)-3-hydroxytetradecanoyl-[acyl-carrier-protein] and UDP-N-acetyl-alpha-D-glucosamine: step 6/6. Functionally, transfers the gamma-phosphate of ATP to the 4'-position of a tetraacyldisaccharide 1-phosphate intermediate (termed DS-1-P) to form tetraacyldisaccharide 1,4'-bis-phosphate (lipid IVA). This is Tetraacyldisaccharide 4'-kinase from Flavobacterium johnsoniae (strain ATCC 17061 / DSM 2064 / JCM 8514 / BCRC 14874 / CCUG 350202 / NBRC 14942 / NCIMB 11054 / UW101) (Cytophaga johnsonae).